The following is a 422-amino-acid chain: 5-hydroxytryptamine receptor 1A (422 aa).

Positions 1–23 are disordered; the sequence is MDVLSPGQGNNTTSPPAPFETGG. Residues 1 to 38 lie on the Extracellular side of the membrane; it reads MDVLSPGQGNNTTSPPAPFETGGNTTGISDVTFSYQVI. N10, N11, and N24 each carry an N-linked (GlcNAc...) asparagine glycan. A helical transmembrane segment spans residues 39–59; that stretch reads TSLLLGTLIFCAVLGNACVVA. At 60 to 73 the chain is on the cytoplasmic side; that stretch reads AIALERSLQNVANY. The helical transmembrane segment at 74–98 threads the bilayer; sequence LIGSLAVTDLMVSVLVLPMAALYQV. The Extracellular portion of the chain corresponds to 99 to 107; that stretch reads LNKWTLGQV. A helical membrane pass occupies residues 108-132; sequence TCDLFIALDVLCCTSSILHLCAIAL. C109 and C187 are oxidised to a cystine. Residues D116 and C120 each contribute to the serotonin site. The DRY motif; important for ligand-induced conformation changes motif lies at 133-135; it reads DRY. The Cytoplasmic segment spans residues 133–152; that stretch reads DRYWAITDPIDYVNKRTPRR. Residues 153 to 174 traverse the membrane as a helical segment; it reads AAALISLTWLIGFLISIPPMLG. Residues 175-193 lie on the Extracellular side of the membrane; it reads WRTPEDRSDPDACTISKDH. A helical transmembrane segment spans residues 194–216; the sequence is GYTIYSTFGAFYIPLLLMLVLYG. Over 217 to 346 the chain is Cytoplasmic; sequence RIFRAARFRI…LARERKTVKT (130 aa). Positions 235 to 263 are disordered; sequence KTGADTHHGASPAPQPKKSVNGESGSRNW. Residues T314, K345, T346, and G352 each contribute to the 1D-myo-inositol 4-phosphate site. Residues 347 to 370 form a helical membrane-spanning segment; the sequence is LGIIMGTFILCWLPFFIVALVLPF. Residues 371–378 lie on the Extracellular side of the membrane; it reads CESSCHMP. Residues 379 to 403 form a helical membrane-spanning segment; sequence TLLGAIINWLGYSNSLLNPVIYAYF. The NPxxY motif; important for ligand-induced conformation changes and signaling signature appears at 396-400; it reads NPVIY. Residues F403, N404, and K405 each coordinate 1D-myo-inositol 4-phosphate. Over 404-422 the chain is Cytoplasmic; sequence NKDFQNAFKKIIKCKFCRQ.

Belongs to the G-protein coupled receptor 1 family. 5-hydroxytryptamine receptor subfamily. HTR1A sub-subfamily. In terms of assembly, heterodimer; heterodimerizes with GPER1. Interacts with YIF1B. Interacts with GPR39 and GALR1.

It localises to the cell membrane. The protein resides in the cell projection. It is found in the dendrite. With respect to regulation, G-protein coupled receptor activity is regulated by lipids: phosphatidylinositol 4-phosphate increases HTR1A-mediated activity. Its function is as follows. G-protein coupled receptor for 5-hydroxytryptamine (serotonin). Also functions as a receptor for various drugs and psychoactive substances. Ligand binding causes a conformation change that triggers signaling via guanine nucleotide-binding proteins (G proteins) and modulates the activity of downstream effectors, such as adenylate cyclase. HTR1A is coupled to G(i)/G(o) G alpha proteins and mediates inhibitory neurotransmission: signaling inhibits adenylate cyclase activity and activates a phosphatidylinositol-calcium second messenger system that regulates the release of Ca(2+) ions from intracellular stores. Beta-arrestin family members regulate signaling by mediating both receptor desensitization and resensitization processes. The polypeptide is 5-hydroxytryptamine receptor 1A (HTR1A) (Pongo pygmaeus (Bornean orangutan)).